The following is a 220-amino-acid chain: Protein ABA DEFICIENT 4, chloroplastic (220 aa).

Residues 1-37 (MGFSSFISQPLSSSLSVMKRNVSAKRSELCLDSSKIR) constitute a chloroplast transit peptide. The next 4 membrane-spanning stretches (helical) occupy residues 77 to 97 (IASS…TLMV), 112 to 132 (SVPY…SWTP), 154 to 174 (MFSS…VDLF), and 195 to 215 (SLCL…KAII).

In terms of tissue distribution, expressed in root vasculature, root hairs, leaves, trichomes, sepals, stamens, stigma, pedicels, siliques and embryo.

Its subcellular location is the plastid. It localises to the chloroplast membrane. Required for neoxanthin biosynthesis, an intermediary step in abscisic acid (ABA) biosynthesis. Probably not involved directly in the enzymatic conversion of violaxanthin to neoxanthin. Cannot convert violaxanthin to neoxanthin in vitro. Required for ABA biosynthesis in response to drought stress. Required for neoxanthin biosynthesis which is involved in photoprotection of photosystem II (PSII). Neoxanthin acts as an antioxidant within the photosystem PSII supercomplex. The chain is Protein ABA DEFICIENT 4, chloroplastic from Arabidopsis thaliana (Mouse-ear cress).